A 248-amino-acid polypeptide reads, in one-letter code: 2,3-bisphosphoglycerate-dependent phosphoglycerate mutase (248 aa).

Substrate is bound by residues 8 to 15, 21 to 22, R60, 87 to 90, K98, 114 to 115, and 183 to 184; these read RHGESTWN, TG, ERHY, RR, and GN. Catalysis depends on H9, which acts as the Tele-phosphohistidine intermediate. The active-site Proton donor/acceptor is the E87.

This sequence belongs to the phosphoglycerate mutase family. BPG-dependent PGAM subfamily. As to quaternary structure, homodimer.

The enzyme catalyses (2R)-2-phosphoglycerate = (2R)-3-phosphoglycerate. It participates in carbohydrate degradation; glycolysis; pyruvate from D-glyceraldehyde 3-phosphate: step 3/5. Its function is as follows. Catalyzes the interconversion of 2-phosphoglycerate and 3-phosphoglycerate. In Cupriavidus pinatubonensis (strain JMP 134 / LMG 1197) (Cupriavidus necator (strain JMP 134)), this protein is 2,3-bisphosphoglycerate-dependent phosphoglycerate mutase.